Reading from the N-terminus, the 1178-residue chain is Niemann-Pick type C1-related protein (1178 aa).

A glycan (N-linked (GlcNAc...) asparagine) is linked at Asn41. A run of 2 helical transmembrane segments spans residues 157-177 (PWLF…GIFL) and 412-432 (VVEW…TSVV). One can recognise an SSD domain in the interval 414 to 570 (EWLRLCAAVL…LTFFLAGLSL (157 aa)). A glycan (N-linked (GlcNAc...) asparagine) is linked at Asn433. 4 helical membrane passes run 448-468 (GALA…LCGV), 478-498 (PFLA…AYSL), 516-536 (AGLS…IGAL), and 545-565 (FCII…TFFL). A glycan (N-linked (GlcNAc...) asparagine) is linked at Asn621. The chain crosses the membrane as a helical span at residues 789 to 809 (ATVLVIFAAVTALAIYGATTL). Residues Asn917 and Asn943 are each glycosylated (N-linked (GlcNAc...) asparagine). Helical transmembrane passes span 986 to 1006 (FTLT…LLLI), 1013 to 1033 (IIVV…MALI), 1037 to 1057 (LSMI…DFTI), 1080 to 1100 (IVMG…ILAL), and 1114 to 1134 (MMFM…PVVL).

It belongs to the patched family.

It is found in the inner membrane complex. It carries out the reaction cholesterol(in) = cholesterol(out). In terms of biological role, likely facilitates the efflux of cholesterol and gangliosides from membranes. Plays a role in the regulation of lipid homeostasis. This is Niemann-Pick type C1-related protein from Toxoplasma gondii (strain ATCC 50611 / Me49).